The sequence spans 408 residues: Homogentisate geranylgeranyltransferase (408 aa).

A chloroplast-targeting transit peptide spans 1–62 (MQAVTAAAAA…TVMHKFSAIS (62 aa)). Helical transmembrane passes span 122-142 (HTIF…MKSI), 156-176 (ALTA…LYDI), 194-214 (SVAT…SIGI), 221-241 (LMCA…EAPF), 248-268 (ALLA…LAFF), 286-306 (LVFA…FKDI), 329-349 (VYQL…LVGA), 352-372 (TNLF…LTLW), and 386-406 (VTSF…LIPF).

It belongs to the UbiA prenyltransferase family. In terms of tissue distribution, expressed in seeds.

It is found in the plastid. Its subcellular location is the chloroplast membrane. The catalysed reaction is homogentisate + (2E,6E,10E)-geranylgeranyl diphosphate + H(+) = 6-geranylgeranyl-2-methylbenzene-1,4-diol + CO2 + diphosphate. It functions in the pathway cofactor biosynthesis; tocopherol biosynthesis. Involved in the synthesis of tocotrienol (vitamin E). Catalyzes the condensation of homogentisate and geranylgeranyl diphosphate to form 2-methyl-6-geranylgeranylbenzoquinol. Possesses low activity with phytyl diphosphate as substrate. This chain is Homogentisate geranylgeranyltransferase, found in Hordeum vulgare (Barley).